Reading from the N-terminus, the 187-residue chain is uncharacterized protein (187 aa).

The first 17 residues, 1–17 (MYAGGRVVRSAFARGKV), serve as a signal peptide directing secretion. Residue cysteine 18 is the site of N-palmitoyl cysteine attachment. Cysteine 18 carries the S-diacylglycerol cysteine lipid modification.

It is found in the cell membrane. This is an uncharacterized protein from Treponema pallidum (strain Nichols).